The chain runs to 200 residues: UPF0329 protein ECU06_1670 (200 aa).

The protein belongs to the UPF0329 family.

This chain is UPF0329 protein ECU06_1670, found in Encephalitozoon cuniculi (strain GB-M1) (Microsporidian parasite).